Reading from the N-terminus, the 242-residue chain is 7-cyano-7-deazaguanine synthase (242 aa).

ATP is bound at residue 12–22 (FSGGQDSATCL). Positions 200, 215, 218, and 221 each coordinate Zn(2+).

Belongs to the QueC family. Zn(2+) serves as cofactor.

It catalyses the reaction 7-carboxy-7-deazaguanine + NH4(+) + ATP = 7-cyano-7-deazaguanine + ADP + phosphate + H2O + H(+). The protein operates within purine metabolism; 7-cyano-7-deazaguanine biosynthesis. Catalyzes the ATP-dependent conversion of 7-carboxy-7-deazaguanine (CDG) to 7-cyano-7-deazaguanine (preQ(0)). This chain is 7-cyano-7-deazaguanine synthase, found in Gluconobacter oxydans (strain 621H) (Gluconobacter suboxydans).